Reading from the N-terminus, the 141-residue chain is MAKKEIGKIKLQIPAGSANPSPPVGPALGQHGVNIMEFCKAFNAKTQDQKGMIIPVIITVYQDRSFSFITKTPPASTLLLKAAKLQKGSGEPNKNKVGKVTKAQVKEIAELKAPDLTAADTEAAMKSIMGTARSMGIEVTE.

The protein belongs to the universal ribosomal protein uL11 family. Part of the ribosomal stalk of the 50S ribosomal subunit. Interacts with L10 and the large rRNA to form the base of the stalk. L10 forms an elongated spine to which L12 dimers bind in a sequential fashion forming a multimeric L10(L12)X complex. One or more lysine residues are methylated.

Functionally, forms part of the ribosomal stalk which helps the ribosome interact with GTP-bound translation factors. The chain is Large ribosomal subunit protein uL11 from Maridesulfovibrio salexigens (strain ATCC 14822 / DSM 2638 / NCIMB 8403 / VKM B-1763) (Desulfovibrio salexigens).